The chain runs to 358 residues: C-X-C chemokine receptor type 4-A (358 aa).

The tract at residues Met-1 to Phe-25 is important for chemokine binding and signaling. Residues Met-1–Phe-44 lie on the Extracellular side of the membrane. Asn-16 and Asn-20 each carry an N-linked (GlcNAc...) asparagine glycan. 2 cysteine pairs are disulfide-bonded: Cys-32–Cys-281 and Cys-113–Cys-190. The chain crosses the membrane as a helical span at residues Leu-45 to Met-67. Topologically, residues Gly-68–Arg-81 are cytoplasmic. A helical membrane pass occupies residues Leu-82–Ala-103. Residues Trp-98–Asp-101 are chemokine binding. At Ile-104–Lys-114 the chain is on the extracellular side. A helical transmembrane segment spans residues Ala-115–Ile-134. The interval His-117–Thr-121 is chemokine binding. The Cytoplasmic portion of the chain corresponds to Ser-135–Lys-158. The segment at Tyr-139–Ser-151 is involved in dimerization; when bound to chemokine. Residues Val-159 to Phe-178 traverse the membrane as a helical segment. At Ala-179–Trp-202 the chain is on the extracellular side. Residues Cys-190–Tyr-194 are chemokine binding, important for signaling. The helical transmembrane segment at Thr-203–Leu-223 threads the bilayer. Residues Ile-224 to Thr-248 are Cytoplasmic-facing. Residues Val-249–Thr-268 form a helical membrane-spanning segment. At Asp-269–Met-289 the chain is on the extracellular side. A helical transmembrane segment spans residues Ala-290–Tyr-309. Topologically, residues Ala-310–Ser-358 are cytoplasmic. Residues Lys-338–Ser-358 form a disordered region. Residues Ser-344–Ser-358 are compositionally biased toward low complexity.

This sequence belongs to the G-protein coupled receptor 1 family. As to quaternary structure, monomer. Can form dimers. Sulfation is required for efficient binding of cxcl12/sdf-1alpha and promotes its dimerization. Post-translationally, O- and N-glycosylated. Highly expressed in the embryonic nervous system including forebrain, hindbrain and sensory organs (including eye), and in neural crest cells. Also expressed in the dorsal lateral plate, the first site of definitive hematopoiesis in the embryo. Appears in migrating presumptive primordial germ cells (pPGCs) from stage 24. Expressed in the epidermis at stage 40. In the adult, highly expressed in the spleen with lower levels of expression in the liver and very low levels in kidney, heart, skin and brain.

The protein localises to the cell membrane. It localises to the cytoplasm. The protein resides in the nucleus. It is found in the early endosome. Its subcellular location is the late endosome. The protein localises to the lysosome. Functionally, receptor for the C-X-C chemokine cxcl12/sdf-1. Transduces a signal by increasing the intracellular level of calcium ions. Signaling with cxcl12/sdf-1 mediates the directional movement of mesodermal cells during gastrulation. May play a role in the migration of embryonic presumptive primordial germ cells (pPGCs). May also be involved in regulating the migration of hematopoietic stem cells into the larval liver. This Xenopus laevis (African clawed frog) protein is C-X-C chemokine receptor type 4-A (cxcr4-a).